The chain runs to 352 residues: MITPQQAIERLISNNELFYDEMTDLMRQMMSGKVPPEQIAAILTGLRIKVETVSEITAAAAVMREFATKVPLENAEGLVDIVGTGGDGAKTFNISTTSMFVAAAAGAKVAKHGGRSVSSSSGAADVVEQMGANLNLTPEQVAQSIRQTGIGFMFAPNHHSAMRHVAPVRRSLGFRSIFNILGPLTNPAGAPNQLLGVFHTDLCGILSRVLQQLGSKHVLVVCGEGGLDEITLTGKTRVAELKDGKISEYDIRPEDFGIETRRNLDEIKVANTQESLLKMNEVLEGREGAARDIVLLNTAAALYAGNVAASLSDGISAAREAIDSGRAKSKKEEFVGFQPQQRCHFLGKMELG.

5-phospho-alpha-D-ribose 1-diphosphate is bound by residues Gly-83, 86–87, Thr-91, 93–96, 111–119, and Ala-123; these read GD, NIST, and KHGGRSVSS. Gly-83 is a binding site for anthranilate. Ser-95 is a binding site for Mg(2+). Arg-169 contributes to the anthranilate binding site. The Mg(2+) site is built by Asp-228 and Glu-229.

Belongs to the anthranilate phosphoribosyltransferase family. Homodimer. The cofactor is Mg(2+).

The catalysed reaction is N-(5-phospho-beta-D-ribosyl)anthranilate + diphosphate = 5-phospho-alpha-D-ribose 1-diphosphate + anthranilate. It functions in the pathway amino-acid biosynthesis; L-tryptophan biosynthesis; L-tryptophan from chorismate: step 2/5. In terms of biological role, catalyzes the transfer of the phosphoribosyl group of 5-phosphorylribose-1-pyrophosphate (PRPP) to anthranilate to yield N-(5'-phosphoribosyl)-anthranilate (PRA). In Neisseria meningitidis serogroup C (strain 053442), this protein is Anthranilate phosphoribosyltransferase.